Reading from the N-terminus, the 460-residue chain is Nuclear distribution protein PAC1-1 (460 aa).

One can recognise a LisH domain in the interval 9–41; the sequence is QADELHRALIAYLTAANLPNTAAALREELNLGE. A coiled-coil region spans residues 74–96; it reads LVTQIMDLESRNHILQSELDNAT. A compositionally biased stretch (polar residues) spans 90–100; it reads SELDNATPTSR. The disordered stretch occupies residues 90–115; that stretch reads SELDNATPTSRQNKDPVAWLPRAPPR. WD repeat units follow at residues 120–161, 163–203, 207–247, 250–289, 294–354, 355–394, 399–439, and 441–460; these read SHRD…RTIK, HTKA…KNIR, GHDH…CVKT, GHAEWVRDVCPSFDGKYILSTSDDYTSRLWDVTVTNPEPR, GHEH…KTLA, GHDNWVRGLVFHPGGKYLLSVSDDKTLRCWDLTQEGKCVK, AHGH…VTPD, and QIRCVIATGSVDLNVRIFAN.

Belongs to the WD repeat LIS1/nudF family. As to quaternary structure, self-associates. Interacts with NDL1 and dynein.

The protein localises to the cytoplasm. It is found in the cytoskeleton. It localises to the spindle pole. Functionally, positively regulates the activity of the minus-end directed microtubule motor protein dynein. May enhance dynein-mediated microtubule sliding by targeting dynein to the microtubule plus end. Required for nuclear migration during vegetative growth as well as development. Required for retrograde early endosome (EE) transport from the hyphal tip. Required for localization of dynein to the mitotic spindle poles. Recruits additional proteins to the dynein complex at SPBs. In Sordaria macrospora (strain ATCC MYA-333 / DSM 997 / K(L3346) / K-hell), this protein is Nuclear distribution protein PAC1-1.